We begin with the raw amino-acid sequence, 154 residues long: Small ribosomal subunit protein uS7 (154 aa).

It belongs to the universal ribosomal protein uS7 family.

The polypeptide is Small ribosomal subunit protein uS7 (RPS5) (Nicotiana plumbaginifolia (Leadwort-leaved tobacco)).